Consider the following 158-residue polypeptide: 6,7-dimethyl-8-ribityllumazine synthase 2 (158 aa).

5-amino-6-(D-ribitylamino)uracil-binding positions include W20, 54 to 56 (AYE), and 78 to 80 (FVI). R86 (proton donor) is an active-site residue. A 5-amino-6-(D-ribitylamino)uracil-binding site is contributed by S111. H125 provides a ligand contact to (2S)-2-hydroxy-3-oxobutyl phosphate.

The protein belongs to the DMRL synthase family. In terms of assembly, homodecamer, arranged as a dimer of pentamers.

It is found in the cytoplasm. It carries out the reaction (2S)-2-hydroxy-3-oxobutyl phosphate + 5-amino-6-(D-ribitylamino)uracil = 6,7-dimethyl-8-(1-D-ribityl)lumazine + phosphate + 2 H2O + H(+). It participates in cofactor biosynthesis; riboflavin biosynthesis; riboflavin from 2-hydroxy-3-oxobutyl phosphate and 5-amino-6-(D-ribitylamino)uracil: step 1/2. Its function is as follows. Catalyzes the formation of 6,7-dimethyl-8-ribityllumazine by condensation of 5-amino-6-(D-ribitylamino)uracil with 3,4-dihydroxy-2-butanone 4-phosphate. This is the penultimate step in the biosynthesis of riboflavin. The isozyme RibH2 but not RibH1 is essential for Brucella intracellular survival and replication inside macrophages or in mice. Displays low catalytic activity in comparison with the isozyme RibH1. Is a highly immunogenic protein. Activates dendritic cells (DCs) in vitro, increasing the levels of costimulatory molecules and the secretion of pro-inflammatory cytokines, and recruits DCs, B cells and CD8+ T cells in vivo, both effects in a TLR4-dependent manner. Induces the cross presentation of covalently attached peptides and generates a strong and long-lasting humoral immune response without adjuvants; TLR4 signaling is necessary for the induction of the cytotoxic response but not for antigen cross presentation. Elicits a TLR4-mediated protective response against B16 melanoma in mice, slowing tumor growth and prolonging mice survival. The polypeptide is 6,7-dimethyl-8-ribityllumazine synthase 2 (Brucella abortus (strain 2308)).